The chain runs to 31 residues: Cytochrome b6-f complex subunit 6 (31 aa).

Residues 4 to 24 form a helical membrane-spanning segment; the sequence is ITSYFGFLLAALTITSALFIG.

It belongs to the PetL family. The 4 large subunits of the cytochrome b6-f complex are cytochrome b6, subunit IV (17 kDa polypeptide, PetD), cytochrome f and the Rieske protein, while the 4 small subunits are PetG, PetL, PetM and PetN. The complex functions as a dimer.

Its subcellular location is the plastid. It localises to the chloroplast thylakoid membrane. Its function is as follows. Component of the cytochrome b6-f complex, which mediates electron transfer between photosystem II (PSII) and photosystem I (PSI), cyclic electron flow around PSI, and state transitions. PetL is important for photoautotrophic growth as well as for electron transfer efficiency and stability of the cytochrome b6-f complex. The sequence is that of Cytochrome b6-f complex subunit 6 from Gossypium hirsutum (Upland cotton).